A 276-amino-acid polypeptide reads, in one-letter code: NAD-capped RNA hydrolase NudC (276 aa).

Position 82 (R82) interacts with substrate. Zn(2+) contacts are provided by C112 and C115. Substrate is bound at residue E125. Positions 130 and 133 each coordinate Zn(2+). Y138 serves as a coordination point for substrate. A Nudix hydrolase domain is found at 139 to 262 (PRLSPSMIVL…SIARYLIELY (124 aa)). A divalent metal cation-binding residues include A172, E188, and E192. The short motif at 173-194 (GYVEPGESVEQCVAREVREEVG) is the Nudix box element. Residue 206 to 213 (QGWPFPHS) coordinates substrate. A divalent metal cation is bound at residue E233. Residue A255 coordinates substrate.

It belongs to the Nudix hydrolase family. NudC subfamily. As to quaternary structure, homodimer. Mg(2+) is required as a cofactor. Mn(2+) serves as cofactor. It depends on Zn(2+) as a cofactor.

It catalyses the reaction a 5'-end NAD(+)-phospho-ribonucleoside in mRNA + H2O = a 5'-end phospho-adenosine-phospho-ribonucleoside in mRNA + beta-nicotinamide D-ribonucleotide + 2 H(+). The enzyme catalyses NAD(+) + H2O = beta-nicotinamide D-ribonucleotide + AMP + 2 H(+). The catalysed reaction is NADH + H2O = reduced beta-nicotinamide D-ribonucleotide + AMP + 2 H(+). In terms of biological role, mRNA decapping enzyme that specifically removes the nicotinamide adenine dinucleotide (NAD) cap from a subset of mRNAs by hydrolyzing the diphosphate linkage to produce nicotinamide mononucleotide (NMN) and 5' monophosphate mRNA. The NAD-cap is present at the 5'-end of some mRNAs and stabilizes RNA against 5'-processing. Has preference for mRNAs with a 5'-end purine. Catalyzes the hydrolysis of a broad range of dinucleotide pyrophosphates. This is NAD-capped RNA hydrolase NudC from Stutzerimonas stutzeri (strain A1501) (Pseudomonas stutzeri).